A 644-amino-acid polypeptide reads, in one-letter code: Exoribonuclease 2 (644 aa).

The 328-residue stretch at 189 to 516 (REDLTALNFV…NHRLLKAVIT (328 aa)) folds into the RNB domain. An S1 motif domain is found at 561–643 (DIRFNAEIID…ETRGIVAKPA (83 aa)).

It belongs to the RNR ribonuclease family. RNase II subfamily.

It is found in the cytoplasm. The enzyme catalyses Exonucleolytic cleavage in the 3'- to 5'-direction to yield nucleoside 5'-phosphates.. Involved in mRNA degradation. Hydrolyzes single-stranded polyribonucleotides processively in the 3' to 5' direction. This chain is Exoribonuclease 2, found in Pectobacterium atrosepticum (strain SCRI 1043 / ATCC BAA-672) (Erwinia carotovora subsp. atroseptica).